Consider the following 348-residue polypeptide: MLASVAGPISLALVLLALCTRPAMGQDCSAQCQCAAEAAPHCPAGVSLVLDGCGCCRVCAKQLGELCTERDPCDPHKGLFCDFGSPANRKIGVCTAKDGAPCVFGGSVYRSGESFQSSCKYQCTCLDGAVGCVPLCSMDVRLPSPDCPFPRRVKLPGKCCEEWVCDEPKDRTAVGPALAAYRLEDTFGPDPTMMRANCLVQTTEWSACSKTCGMGISTRVTNDNTFCRLEKQSRLCMVRPCEADLEENIKKGKKCIRTPKIAKPVKFELSGCTSVKTYRAKFCGVCTDGRCCTPHRTTTLPVEFKCPDGEIMKKNMMFIKTCACHYNCPGDNDIFESLYYRKMYGDMA.

The first 25 residues, M1–G25, serve as a signal peptide directing secretion. An IGFBP N-terminal domain is found at Q26–K97. Intrachain disulfides connect C28–C53, C32–C55, C34–C56, C42–C59, C67–C81, and C73–C94. Residues A100–D166 form the VWFC domain. A TSP type-1 domain is found at N197–E242. A heparin-binding region spans residues E246 to A348. 5 disulfides stabilise this stretch: C255–C292, C272–C306, C283–C322, C286–C324, and C291–C328. One can recognise a CTCK domain in the interval C255–P329.

The protein belongs to the CCN family. Monomer. Interacts with TSKU. As to expression, testis, spleen, kidney, lung, heart, and brain (lowest level in testis and highest in lung).

It localises to the secreted. Its subcellular location is the extracellular space. The protein resides in the extracellular matrix. Its function is as follows. Major connective tissue mitoattractant secreted by vascular endothelial cells. Promotes proliferation and differentiation of chondrocytes. Is involved in the stimulation of osteoblast differentiation and has a critical role in osteogenesis. Mediates heparin- and divalent cation-dependent cell adhesion in many cell types including fibroblasts, myofibroblasts, endothelial and epithelial cells. Enhances fibroblast growth factor-induced DNA synthesis. The sequence is that of CCN family member 2 from Mus musculus (Mouse).